The sequence spans 894 residues: Myb-like protein K (894 aa).

Positions 93-139 (LQQQQQSPVTNVATNTPPTLQHSISSPSPNNFNNNNNANNQFLSPNS) are enriched in low complexity. 4 disordered regions span residues 93–221 (LQQQ…SASS), 299–353 (QVGN…QPIT), 492–539 (QQQQ…LEMI), and 601–659 (AATT…HWTS). The span at 140–149 (PQVAKSSPSQ) shows a compositional bias: polar residues. Low complexity predominate over residues 150–221 (NNPSTPIANT…SQSLNSSASS (72 aa)). A compositionally biased stretch (polar residues) spans 300–309 (VGNPMQQSND). Low complexity-rich tracts occupy residues 310–353 (MQPQ…QPIT) and 492–527 (QQQQ…PQQM). Composition is skewed to basic and acidic residues over residues 611-640 (GKEE…SKKD) and 649-659 (ASKEKTSHWTS). Residues 649–704 (ASKEKTSHWTSEEHNKFLEAVQQFGIKDYHAIAKFVQTRNHHQVRTHVNTYLKNQK) form the HTH myb-type domain. Residues 677-700 (YHAIAKFVQTRNHHQVRTHVNTYL) constitute a DNA-binding region (H-T-H motif). The tract at residues 703-852 (QKKAEAATSS…EYNSGFDSNS (150 aa)) is disordered. 3 stretches are compositionally biased toward low complexity: residues 710–742 (TSST…QPPI), 751–805 (QQQQ…QQPQ), and 815–845 (PPNN…NEYN).

The protein localises to the nucleus. This Dictyostelium discoideum (Social amoeba) protein is Myb-like protein K (mybK).